The primary structure comprises 226 residues: DNA mismatch repair protein MutH (226 aa).

Belongs to the MutH family.

The protein localises to the cytoplasm. Functionally, sequence-specific endonuclease that cleaves unmethylated GATC sequences. It is involved in DNA mismatch repair. This is DNA mismatch repair protein MutH from Actinobacillus pleuropneumoniae serotype 5b (strain L20).